The sequence spans 304 residues: uncharacterized protein (304 aa).

NAD(+) is bound by residues 136–137 (GI), 215–217 (VGR), and D241. Residue R217 is part of the active site. E246 is a catalytic residue. H265 (proton donor) is an active-site residue. Residue 265 to 268 (HTAN) participates in NAD(+) binding.

This sequence belongs to the D-isomer specific 2-hydroxyacid dehydrogenase family.

This is an uncharacterized protein from Corynebacterium melassecola.